Reading from the N-terminus, the 194-residue chain is dCTP deaminase (194 aa).

Residues 110 to 115 (RSSLAR), Asp-128, 136 to 138 (VLE), Tyr-171, Lys-178, and Gln-182 each bind dCTP. Glu-138 functions as the Proton donor/acceptor in the catalytic mechanism. A disordered region spans residues 172-194 (NKRKSAKYRDQQEAVASRISQDK).

It belongs to the dCTP deaminase family. In terms of assembly, homotrimer.

The enzyme catalyses dCTP + H2O + H(+) = dUTP + NH4(+). It functions in the pathway pyrimidine metabolism; dUMP biosynthesis; dUMP from dCTP (dUTP route): step 1/2. Catalyzes the deamination of dCTP to dUTP. The protein is dCTP deaminase of Shewanella loihica (strain ATCC BAA-1088 / PV-4).